Reading from the N-terminus, the 325-residue chain is NAD kinase (325 aa).

D91 serves as the catalytic Proton acceptor. Residues 91–92, H96, 165–166, H176, H193, D195, and 206–211 contribute to the NAD(+) site; these read DG, ND, and TAYALS.

Belongs to the NAD kinase family. It depends on a divalent metal cation as a cofactor.

Its subcellular location is the cytoplasm. It carries out the reaction NAD(+) + ATP = ADP + NADP(+) + H(+). Its function is as follows. Involved in the regulation of the intracellular balance of NAD and NADP, and is a key enzyme in the biosynthesis of NADP. Catalyzes specifically the phosphorylation on 2'-hydroxyl of the adenosine moiety of NAD to yield NADP. The chain is NAD kinase from Psychrobacter arcticus (strain DSM 17307 / VKM B-2377 / 273-4).